We begin with the raw amino-acid sequence, 234 residues long: Multicopy suppressor of SEC21 protein 27 (234 aa).

Over 1–47 the chain is Cytoplasmic; the sequence is MQTPLESTDVKLDTLNEPSAHLIEKNVALPKDIFRSYLSYWIYEIAR. The residue at position 3 (T3) is a Phosphothreonine. The chain crosses the membrane as a helical span at residues 48–68; it reads YTPVMILSLVIGVLVLLIIFF. Residues 69 to 72 lie on the Extracellular side of the membrane; that stretch reads NDNE. A helical transmembrane segment spans residues 73 to 93; it reads ACVFNSAYYAYLSLVVLLIIL. At 94-234 the chain is on the cytoplasmic side; it reads GDGNPKLVSR…NIDALLKKTE (141 aa). A COPI binding region spans residues 231 to 234; the sequence is KKTE.

Belongs to the DUP/COS family. As to quaternary structure, interacts with MST28. Binds to coatomer proteins of COPI and SEC23/SEC24 of COPII coated vesicles.

The protein localises to the endoplasmic reticulum. Its subcellular location is the golgi apparatus. The protein resides in the cytoplasmic vesicle. It is found in the COPI-coated vesicle membrane. It localises to the COPII-coated vesicle membrane. In terms of biological role, involved in protein trafficking vesicle formation, probably by stabilizing of coatomer at the Golgi membrane and thus allowing the efficient formation of COPI coated vesicles. The protein is Multicopy suppressor of SEC21 protein 27 (MST27) of Saccharomyces cerevisiae (strain ATCC 204508 / S288c) (Baker's yeast).